The chain runs to 2196 residues: Non-reducing polyketide synthase CTB1 (2196 aa).

Residues 11–250 (AFGDQTYDCS…TRLPITAPYH (240 aa)) form an N-terminal acylcarrier protein transacylase domain (SAT) region. Positions 381-814 (KSPIAILAAS…GGNTCLVLED (434 aa)) constitute a Ketosynthase family 3 (KS3) domain. Catalysis depends on for beta-ketoacyl synthase activity residues C553, H688, and H733. A malonyl-CoA:ACP transacylase (MAT) domain region spans residues 922–1223 (AFTGQGSAFA…QTFASINKDK (302 aa)). Residues 1298–1611 (SSSIHKVITN…VPKRLMHYIV (314 aa)) are product template (PT) domain. An N-terminal hotdog fold region spans residues 1302–1441 (HKVITNTITA…EKTALKSAAL (140 aa)). Positions 1302 to 1608 (HKVITNTITA…LQGVPKRLMH (307 aa)) constitute a PKS/mFAS DH domain. The active-site Proton acceptor; for dehydratase activity is the H1335. The interval 1460–1608 (TYRFSKGMIY…LQGVPKRLMH (149 aa)) is C-terminal hotdog fold. The Proton donor; for dehydratase activity role is filled by D1520. A disordered region spans residues 1617–1666 (KASGPPTEKKTSSPPVEKKASAPVAPTRPAIQRKNASIPPPATQVTPQNK). Over residues 1623–1636 (TEKKTSSPPVEKKA) the composition is skewed to basic and acidic residues. 2 Carrier domains span residues 1671-1748 (PSVS…TRLS) and 1775-1857 (DPSP…SGST). 2 positions are modified to O-(pantetheine 4'-phosphoryl)serine: S1708 and S1816. Over residues 1856–1867 (STESFDSTTTKP) the composition is skewed to polar residues. The disordered stretch occupies residues 1856-1923 (STESFDSTTT…PPKGRIPPAW (68 aa)). The span at 1872 to 1887 (ATPPLTDSSASSPPSS) shows a compositional bias: low complexity. Residues 1937–2187 (ILFLFPDGAG…SGAQMLVEHM (251 aa)) form a thioesterase (TE) domain region.

Pantetheine 4'-phosphate is required as a cofactor.

It catalyses the reaction 6 malonyl-CoA + acetyl-CoA + 6 H(+) = nor-toralactone + 6 CO2 + 7 CoA + 2 H2O. It functions in the pathway mycotoxin biosynthesis. Its function is as follows. Polyketide synthase; part of the gene cluster that mediates the biosynthesis of cercosporin, a light-activated, non-host-selective toxin. The perylenequinone chromophore of cercosporin absorbs light energy to attain an electronically-activated triplet state and produces active oxygen species such as the hydroxyl radical, superoxide, hydrogen peroxide or singlet oxygen upon reaction with oxygen molecules. These reactive oxygen species cause damage to various cellular components including lipids, proteins and nucleic acids. The first step of cercosporin biosynthesis is performed by the polyketide synthase CTB1 which catalyzes the formation of nor-toralactone. The starter unit acyltransferase (SAT) domain of CTB1 initiates polyketide extension by the selective utilization of acetyl-CoA, which is elongated to the heptaketide in the beta-ketoacyl synthase (KS) domain by successive condensations with six malonyl units introduced by the malonyl acyltransferase (MAT) domain. The product template (PT) domain catalyzes C4-C9 and C2-C11 aldol cyclizations and dehydrations to a trihydroxynaphthalene, which is thought to be delivered to the thioesterase (TE) domain for product release. The bifunctional enzyme CTB3 then methylates nor-toralactone to toralactone before conducting an unusual oxidative aromatic ring opening. The O-methyltransferase CTB2 further methylates the nascent OH-6 of the CBT3 product, blocking further oxidation at this site before the reductase CTB6 reduces the 2-oxopropyl ketone at position C7, giving naphthalene. The FAD-dependent monooxygenase CTB5 in concert with the multicopper oxidase CTB12 are responsible for homodimerization of naphthalene with CTB7 installing the dioxepine moiety, finally producing cercosporin. The fasciclin domain-containing protein CTB11 might act with CTB5 and CTB12 whereas the roles of CTB9 and CTB10 have still to be elucidated. The chain is Non-reducing polyketide synthase CTB1 from Cercospora nicotianae (Barn spot disease fungus).